Reading from the N-terminus, the 432-residue chain is Uracil permease (432 aa).

A run of 12 helical transmembrane segments spans residues 25 to 45, 65 to 85, 89 to 109, 124 to 144, 155 to 175, 181 to 201, 206 to 226, 228 to 248, 305 to 325, 330 to 350, 370 to 390, and 393 to 413; these read LFAM…DPSI, VPAY…AKTA, GAAM…ALII, VVVG…AVGM, LLHF…SVLA, LIPV…VGLV, VAAA…DYPV, VTWE…SEHI, VYSV…GFVG, LISS…FGII, NLVI…LKIS, and FQIT…LILP.

The protein belongs to the nucleobase:cation symporter-2 (NCS2) (TC 2.A.40) family.

The protein localises to the cell membrane. Functionally, transport of uracil in the cell. The protein is Uracil permease (pyrP) of Bacillus caldolyticus.